The primary structure comprises 513 residues: Protein CYCLOPS (513 aa).

The disordered stretch occupies residues 327-435 (QIHGGTASGE…ERSRKMAEAK (109 aa)). Over residues 334–347 (SGEPSQSESSAAAP) the composition is skewed to low complexity. Over residues 359 to 381 (PSNSSQTLCDSSWKQVGESTQNR) the composition is skewed to polar residues. Residues 384–396 (GVREQIMDNLKDD) are compositionally biased toward basic and acidic residues. 2 consecutive short sequence motifs (nuclear localization signal) follow at residues 397-401 (RKRKR) and 421-424 (KKRR). Residues 447–513 (MQAVMKRCEN…ERLLSETGKI (67 aa)) are a coiled coil.

It belongs to the CYCLOPS family.

It is found in the nucleus. Involved symbiotic signaling. Required for root infection by symbiotic rhizobia, infection thread (IT) formation, and nodule development. Required for symbiosome formation (i.e. the release of the bacteria from the ITs) and subsequent symbiosome development. Involved in arbuscular mycorrhizal (AM) symbiosis. This chain is Protein CYCLOPS, found in Pisum sativum (Garden pea).